The primary structure comprises 447 residues: Rab GDP dissociation inhibitor alpha (447 aa).

Serine 427 carries the post-translational modification Phosphoserine.

This sequence belongs to the Rab GDI family. In terms of assembly, interacts with RHOH. Interacts with the non-phosphorylated forms of RAB1A, RAB3A, RAB5A, RAB5B, RAB5C, RAB8A, RAB8B, RAB10, RAB12, RAB35, and RAB43.

It localises to the cytoplasm. It is found in the golgi apparatus. The protein localises to the trans-Golgi network. Regulates the GDP/GTP exchange reaction of most Rab proteins by inhibiting the dissociation of GDP from them, and the subsequent binding of GTP to them. Promotes the dissociation of GDP-bound Rab proteins from the membrane and inhibits their activation. Promotes the dissociation of RAB1A, RAB3A, RAB5A and RAB10 from membranes. The protein is Rab GDP dissociation inhibitor alpha (GDI1) of Canis lupus familiaris (Dog).